Here is a 278-residue protein sequence, read N- to C-terminus: Tryptophan synthase alpha chain (278 aa).

Catalysis depends on proton acceptor residues E50 and D61.

This sequence belongs to the TrpA family. Tetramer of two alpha and two beta chains.

The catalysed reaction is (1S,2R)-1-C-(indol-3-yl)glycerol 3-phosphate + L-serine = D-glyceraldehyde 3-phosphate + L-tryptophan + H2O. Its pathway is amino-acid biosynthesis; L-tryptophan biosynthesis; L-tryptophan from chorismate: step 5/5. The alpha subunit is responsible for the aldol cleavage of indoleglycerol phosphate to indole and glyceraldehyde 3-phosphate. This Rhodopseudomonas palustris (strain TIE-1) protein is Tryptophan synthase alpha chain.